A 329-amino-acid chain; its full sequence is Beta-ketoacyl-[acyl-carrier-protein] synthase III (329 aa).

Residues C123 and H256 contribute to the active site. Positions 257 to 261 (QANIR) are ACP-binding. N286 is a catalytic residue.

This sequence belongs to the thiolase-like superfamily. FabH family. As to quaternary structure, homodimer.

It localises to the cytoplasm. It catalyses the reaction malonyl-[ACP] + acetyl-CoA + H(+) = 3-oxobutanoyl-[ACP] + CO2 + CoA. It participates in lipid metabolism; fatty acid biosynthesis. Its function is as follows. Catalyzes the condensation reaction of fatty acid synthesis by the addition to an acyl acceptor of two carbons from malonyl-ACP. Catalyzes the first condensation reaction which initiates fatty acid synthesis and may therefore play a role in governing the total rate of fatty acid production. Possesses both acetoacetyl-ACP synthase and acetyl transacylase activities. Its substrate specificity determines the biosynthesis of branched-chain and/or straight-chain of fatty acids. This is Beta-ketoacyl-[acyl-carrier-protein] synthase III from Burkholderia vietnamiensis (strain G4 / LMG 22486) (Burkholderia cepacia (strain R1808)).